We begin with the raw amino-acid sequence, 507 residues long: Sperm-associated antigen 6 (507 aa).

ARM repeat units follow at residues 31–70 (PQNI…RLAN), 73–112 (DDLA…AVGK), 115–154 (PQLA…YIAR), 157–196 (TELS…DISK), 199–238 (PELA…QIAK), 241–280 (VDLA…EIAK), 325–365 (ENLA…QLGR), and 402–441 (KAIK…KVLP).

In terms of assembly, interacts with SPAG16 and SPAG17. In terms of tissue distribution, highly expressed in testis. Not detected in prostate, ovary, spleen, thymus, small intestine, colon and peripheral blood leukocytes.

Its subcellular location is the cytoplasm. The protein resides in the cytoskeleton. The protein localises to the cell projection. It localises to the cilium. It is found in the flagellum. Its subcellular location is the cilium axoneme. Its function is as follows. Important for structural integrity of the central apparatus in the sperm tail and for flagellar motility. The polypeptide is Sperm-associated antigen 6 (Spag6) (Mus musculus (Mouse)).